The chain runs to 246 residues: 3-deoxy-manno-octulosonate cytidylyltransferase (246 aa).

It belongs to the KdsB family.

The protein localises to the cytoplasm. The enzyme catalyses 3-deoxy-alpha-D-manno-oct-2-ulosonate + CTP = CMP-3-deoxy-beta-D-manno-octulosonate + diphosphate. Its pathway is nucleotide-sugar biosynthesis; CMP-3-deoxy-D-manno-octulosonate biosynthesis; CMP-3-deoxy-D-manno-octulosonate from 3-deoxy-D-manno-octulosonate and CTP: step 1/1. It functions in the pathway bacterial outer membrane biogenesis; lipopolysaccharide biosynthesis. Its function is as follows. Activates KDO (a required 8-carbon sugar) for incorporation into bacterial lipopolysaccharide in Gram-negative bacteria. This is 3-deoxy-manno-octulosonate cytidylyltransferase from Rickettsia akari (strain Hartford).